A 153-amino-acid polypeptide reads, in one-letter code: Ribosomal RNA large subunit methyltransferase H (153 aa).

S-adenosyl-L-methionine is bound by residues Leu-63, Gly-102, and 121-126 (FGKITL).

This sequence belongs to the RNA methyltransferase RlmH family. In terms of assembly, homodimer.

Its subcellular location is the cytoplasm. It carries out the reaction pseudouridine(1915) in 23S rRNA + S-adenosyl-L-methionine = N(3)-methylpseudouridine(1915) in 23S rRNA + S-adenosyl-L-homocysteine + H(+). Functionally, specifically methylates the pseudouridine at position 1915 (m3Psi1915) in 23S rRNA. The protein is Ribosomal RNA large subunit methyltransferase H of Sulfurovum sp. (strain NBC37-1).